The sequence spans 366 residues: MVKTFDIVVFPGDYGGPEVLGEIQSQYEQEVTFNLKYHLLGGASFDAHGTPIADEALTDAKAASAVLLGAVGGPAWDKAPIPVESGLGRLRKALDAFGNLRPVKFIHPILTETSALKEQVCRGADLLIIRELTGGIYYGARQEHDGTLNAASDLDHYERAQVQRVARLAGTLAMSTQPPTPITSLDKANLLAACGRLWRGVVEETIRREFPDVELKHMLIDTAAMTLGCRPTKLNGIVLTSNMFGDIISDQASAIPGSLGLLPSASLCAIPGGESGGCVHGIYEPVHGSAPDIAGQGIINPTGMILSVAMMLRYSLDMPAAATAVETAVSRVIERGGRTRDVGGTTSTAEFGDQVVACLRENTEDK.

Residue 71-73 (VGG) coordinates NADP(+). Substrate is bound by residues arginine 91 and arginine 130. Mg(2+) is bound by residues aspartate 221, aspartate 246, and aspartate 250. 277–282 (GCVHGI) provides a ligand contact to NADP(+).

This sequence belongs to the isocitrate and isopropylmalate dehydrogenases family. Homodimer. The cofactor is Mg(2+). It depends on Mn(2+) as a cofactor.

It catalyses the reaction (2R,3S)-3-isopropylmalate + NAD(+) = 4-methyl-2-oxopentanoate + CO2 + NADH. It functions in the pathway antifungal biosynthesis. Functionally, isopropyl malate dehydrogenase; part of the gene cluster that mediates the de novo generation of L-homotyrosine from acetyl-CoA and 4-hydroxyphenyl-pyruvate. L-homotyrosine is a building block of echinocandin B, a fungal lipidated cyclic hexapeptide that acts as an antifungal agent. L-homotyrosine 4-hydroxyphenyl-pyruvate first undergoes an aldol-type condensation by htyA with the C-2 of acetyl-CoA followed by the release of CoA to form 2-(4-hydroxybenzyl)-malate. This is followed by isomerization of 2-(4-hydroxy-benzyl)-malate to 3-(4-hydroxybenzyl)-malate by htyD. Thereafter, 3-(4-hydroxybenzyl)-malate undergoes decarboxylation and oxidation to form 2-oxo-4-(4-hydroxybenzyl)butanoic acid, coupled to reduction of NAD(+) to NADH by htyC. The product then undergoes transamination catalyzed by htyB to form L-homotyrosine. In Aspergillus rugulosus (Emericella rugulosa), this protein is Isopropyl malate dehydrogenase htyC.